The sequence spans 72 residues: uncharacterized protein (72 aa).

Belongs to the phage portal family. HK97 subfamily.

This is an uncharacterized protein from Rickettsia conorii (strain ATCC VR-613 / Malish 7).